We begin with the raw amino-acid sequence, 221 residues long: Thymidylate kinase (221 aa).

10–17 (GIDGAGKT) provides a ligand contact to ATP.

This sequence belongs to the thymidylate kinase family.

The catalysed reaction is dTMP + ATP = dTDP + ADP. Functionally, phosphorylation of dTMP to form dTDP in both de novo and salvage pathways of dTTP synthesis. This Desulforudis audaxviator (strain MP104C) protein is Thymidylate kinase.